Here is a 373-residue protein sequence, read N- to C-terminus: Protein-glutamate methylesterase/protein-glutamine glutaminase 1 (373 aa).

Positions 16 to 133 constitute a Response regulatory domain; the sequence is RVVVVDDSAL…ASGLTELSDQ (118 aa). Position 67 is a 4-aspartylphosphate (Asp-67). Positions 175 to 367 constitute a CheB-type methylesterase domain; that stretch reads RVSTEKLICI…PALIAKLSSA (193 aa). Active-site residues include Ser-187, His-213, and Asp-309.

This sequence belongs to the CheB family. Phosphorylated by CheA. Phosphorylation of the N-terminal regulatory domain activates the methylesterase activity.

The protein localises to the cytoplasm. It carries out the reaction [protein]-L-glutamate 5-O-methyl ester + H2O = L-glutamyl-[protein] + methanol + H(+). It catalyses the reaction L-glutaminyl-[protein] + H2O = L-glutamyl-[protein] + NH4(+). Involved in chemotaxis. Part of a chemotaxis signal transduction system that modulates chemotaxis in response to various stimuli. Catalyzes the demethylation of specific methylglutamate residues introduced into the chemoreceptors (methyl-accepting chemotaxis proteins or MCP) by CheR. Also mediates the irreversible deamidation of specific glutamine residues to glutamic acid. This is Protein-glutamate methylesterase/protein-glutamine glutaminase 1 from Albidiferax ferrireducens (strain ATCC BAA-621 / DSM 15236 / T118) (Rhodoferax ferrireducens).